Consider the following 305-residue polypeptide: Protein MFI (305 aa).

In terms of assembly, can homodimerize. Interacts with MFF; the interaction inhibits MFF interaction with DNM1L.

It localises to the cytoplasm. The protein localises to the cytosol. Its subcellular location is the mitochondrion outer membrane. Acts as an inhibitor of mitochondrial fission. Interacts with MFF and prevents DNM1L recruitment to mitochondria, promoting a more fused mitochondrial network. The chain is Protein MFI from Rattus norvegicus (Rat).